The primary structure comprises 270 residues: 4-hydroxy-tetrahydrodipicolinate reductase (270 aa).

NAD(+)-binding positions include 11-16 (GASGRM) and Glu-37. Arg-38 contacts NADP(+). Residues 101 to 103 (GTT) and 125 to 128 (APNM) each bind NAD(+). The Proton donor/acceptor role is filled by His-158. His-159 lines the (S)-2,3,4,5-tetrahydrodipicolinate pocket. The active-site Proton donor is the Lys-162. 168 to 169 (GT) is a binding site for (S)-2,3,4,5-tetrahydrodipicolinate.

This sequence belongs to the DapB family.

It is found in the cytoplasm. It carries out the reaction (S)-2,3,4,5-tetrahydrodipicolinate + NAD(+) + H2O = (2S,4S)-4-hydroxy-2,3,4,5-tetrahydrodipicolinate + NADH + H(+). The enzyme catalyses (S)-2,3,4,5-tetrahydrodipicolinate + NADP(+) + H2O = (2S,4S)-4-hydroxy-2,3,4,5-tetrahydrodipicolinate + NADPH + H(+). The protein operates within amino-acid biosynthesis; L-lysine biosynthesis via DAP pathway; (S)-tetrahydrodipicolinate from L-aspartate: step 4/4. In terms of biological role, catalyzes the conversion of 4-hydroxy-tetrahydrodipicolinate (HTPA) to tetrahydrodipicolinate. This is 4-hydroxy-tetrahydrodipicolinate reductase from Shewanella amazonensis (strain ATCC BAA-1098 / SB2B).